The following is a 208-amino-acid chain: Imidazoleglycerol-phosphate dehydratase (208 aa).

The disordered stretch occupies residues 1–20; it reads MSRRATVKAPRAGAAARRGA. Residues 7–19 are compositionally biased toward low complexity; that stretch reads VKAPRAGAAARRG.

It belongs to the imidazoleglycerol-phosphate dehydratase family.

Its subcellular location is the cytoplasm. The enzyme catalyses D-erythro-1-(imidazol-4-yl)glycerol 3-phosphate = 3-(imidazol-4-yl)-2-oxopropyl phosphate + H2O. It participates in amino-acid biosynthesis; L-histidine biosynthesis; L-histidine from 5-phospho-alpha-D-ribose 1-diphosphate: step 6/9. The protein is Imidazoleglycerol-phosphate dehydratase of Anaeromyxobacter sp. (strain K).